The following is a 148-amino-acid chain: Large ribosomal subunit protein bL9 (148 aa).

It belongs to the bacterial ribosomal protein bL9 family.

Functionally, binds to the 23S rRNA. This Alkaliphilus oremlandii (strain OhILAs) (Clostridium oremlandii (strain OhILAs)) protein is Large ribosomal subunit protein bL9.